We begin with the raw amino-acid sequence, 204 residues long: Leucyl/phenylalanyl-tRNA--protein transferase (204 aa).

The protein belongs to the L/F-transferase family.

It is found in the cytoplasm. The enzyme catalyses N-terminal L-lysyl-[protein] + L-leucyl-tRNA(Leu) = N-terminal L-leucyl-L-lysyl-[protein] + tRNA(Leu) + H(+). The catalysed reaction is N-terminal L-arginyl-[protein] + L-leucyl-tRNA(Leu) = N-terminal L-leucyl-L-arginyl-[protein] + tRNA(Leu) + H(+). It carries out the reaction L-phenylalanyl-tRNA(Phe) + an N-terminal L-alpha-aminoacyl-[protein] = an N-terminal L-phenylalanyl-L-alpha-aminoacyl-[protein] + tRNA(Phe). Functionally, functions in the N-end rule pathway of protein degradation where it conjugates Leu, Phe and, less efficiently, Met from aminoacyl-tRNAs to the N-termini of proteins containing an N-terminal arginine or lysine. This chain is Leucyl/phenylalanyl-tRNA--protein transferase, found in Brucella abortus (strain 2308).